The sequence spans 554 residues: MEFPASVASLSANTVGSNDVLRRSVAYHPNIWGDFFLAHTSEFMEISIAEKEEHEWLKEEIKKLLVQTEYDSILKLELIDSIQRLGVSYHFEKEIDRILRYVHQTYPIYETENKDLRMLALRFRLLRQHGFHVPCDVFSEFIDAEGNLMESIAYDIQGILSLYEASNYGVLGEEILDKALDSCSSHLESLITDTNDDRLSRQVKEALKIPISKTLTRLGARKFISMYKEDDSHNEKLLKFAMLDFNMVQRLHQNELSHLTSWWKELDFANKLPFARDRLVECYFWIMGVYFEPRHEIARKILTKVIYMASVLDDTYDVYGTLDELILFTSVVRRWDISGIDELPTYMRIYLRALFDVYVEMEEEMGKIGKSYAVEYAKEEMKRLAEVYFQEAQWFFSKYKPTMQEYMKVALLSSGYMMMTINSLAVIEDPITKKEFDWVVSEPPILKSSSIITRLMDDLAGYGSEDKYSAVHLYMNEKGVSEEEAFQELRKQVKNSWKNRNKECLEPRSASVPILTTVVNFTRVVVVLYTDEDAYGNSKNKTKDMIKSILVDPV.

Mn(2+) contacts are provided by D313 and D317. Residues 313–317 (DDTYD) carry the DDXXD motif motif. Homodimerization regions lie at residues 319–325 (YGTLDEL) and 391–427 (EAQW…LAVI). D457 and E465 together coordinate Mn(2+).

It belongs to the terpene synthase family. Homodimer. Mn(2+) is required as a cofactor. The cofactor is Mg(2+). In terms of tissue distribution, expressed in peltate glandular trichomes. Present at low levels in flowers, leaves and stems.

The catalysed reaction is (2E,6E)-farnesyl diphosphate = (-)-(E)-beta-caryophyllene + diphosphate. It carries out the reaction (2E,6E)-farnesyl diphosphate = alpha-humulene + diphosphate. Its pathway is secondary metabolite biosynthesis; terpenoid biosynthesis. Involved in the biosynthesis of phenolic sesquiterpenes natural products. Sesquiterpene synthase converting (2E,6E)-farnesyl diphosphate (FPP) to (E)-beta-caryophyllene and alpha-humulene. This is (E)-beta-caryophyllene synthase from Origanum vulgare (Wild marjoram).